The sequence spans 494 residues: Sulfate adenylyltransferase subunit 1 (494 aa).

The tr-type G domain occupies 24–240 (TRPLRLITCG…LELATVRSAQ (217 aa)). The tract at residues 33 to 40 (GSVDDGKS) is G1. A GTP-binding site is contributed by 33–40 (GSVDDGKS). The G2 stretch occupies residues 91 to 95 (GITID). The interval 112–115 (DTPG) is G3. GTP-binding positions include 112–116 (DTPGH) and 167–170 (NKID). Residues 167 to 170 (NKID) form a G4 region. The segment at 204–206 (SAL) is G5.

The protein belongs to the TRAFAC class translation factor GTPase superfamily. Classic translation factor GTPase family. CysN/NodQ subfamily. Heterodimer composed of CysD, the smaller subunit, and CysN.

It catalyses the reaction sulfate + ATP + H(+) = adenosine 5'-phosphosulfate + diphosphate. It functions in the pathway sulfur metabolism; hydrogen sulfide biosynthesis; sulfite from sulfate: step 1/3. Functionally, with CysD forms the ATP sulfurylase (ATPS) that catalyzes the adenylation of sulfate producing adenosine 5'-phosphosulfate (APS) and diphosphate, the first enzymatic step in sulfur assimilation pathway. APS synthesis involves the formation of a high-energy phosphoric-sulfuric acid anhydride bond driven by GTP hydrolysis by CysN coupled to ATP hydrolysis by CysD. In Rhizobium rhizogenes (strain K84 / ATCC BAA-868) (Agrobacterium radiobacter), this protein is Sulfate adenylyltransferase subunit 1.